We begin with the raw amino-acid sequence, 681 residues long: Peroxisomal acyl-coenzyme A oxidase 2 (681 aa).

The residue at position 9 (S9) is a Phosphoserine. K66, K137, K453, K561, and K667 each carry N6-succinyllysine. Residues 679–681 (SNL) carry the Microbody targeting signal motif.

It belongs to the acyl-CoA oxidase family. In terms of assembly, homodimer. FAD is required as a cofactor. In terms of tissue distribution, liver and kidney.

It is found in the peroxisome. It catalyses the reaction (25R)-3alpha,7alpha,12alpha-trihydroxy-5beta-cholestan-26-oyl-CoA + A + H2O = (24R,25R)-3alpha,7alpha,12alpha,24-tetrahydroxy-5beta-cholestan-26-oyl-CoA + AH2. It carries out the reaction (25S)-3alpha,7alpha,12alpha-trihydroxy-5beta-cholestan-26-oyl-CoA + O2 = (24E)-3alpha,7alpha,12alpha-trihydroxy-5beta-cholest-24-en-26-oyl-CoA + H2O2. Oxidizes the CoA esters of the bile acid intermediates di- and tri-hydroxycholestanoic acids. Capable of oxidizing short as well as long chain 2-methyl branched fatty acids. This Oryctolagus cuniculus (Rabbit) protein is Peroxisomal acyl-coenzyme A oxidase 2.